A 114-amino-acid chain; its full sequence is ATP-dependent Clp protease adapter protein ClpS (114 aa).

The protein belongs to the ClpS family. Binds to the N-terminal domain of the chaperone ClpA.

Functionally, involved in the modulation of the specificity of the ClpAP-mediated ATP-dependent protein degradation. The polypeptide is ATP-dependent Clp protease adapter protein ClpS (Bdellovibrio bacteriovorus (strain ATCC 15356 / DSM 50701 / NCIMB 9529 / HD100)).